The following is a 404-amino-acid chain: MSHAIDELQAIIADLKTELETEPKSSGGVASNSRLARDRIDRMSAEVVDSNPYSRLMALQRMNIVKDYERIRYKAVAIVGVGGVGSVTADMLTRCGIGKLILFDYDKVELANMNRLFFTPDQAGLSKVAAAAATLSFINPDVEIETHNYNITTVENFDRFLDTISQGGRIAGQPVDLVLSCVDNFEARMAINAACNERNLNWFESGVSENAVSGHIQFIRPGDTACFACAPPLVVAENIDEKTLKREGVCAASLPTTMGITAGFLVQNALKYLLNFGEVSDYLGYNALSDFFPKMTLKPNPQCDDRNCLVRQKEFQARPKPVLIEEKAVSEEPLHATNEWGIELVAEDAPESNTTPAETPVMGEGLRLAYEAPEKSSETSEETVSAATADETSLEDLMAQMKSM.

ATP contacts are provided by Gly83, Asp104, Lys127, Asn150, and Asn184. Zn(2+)-binding residues include Cys226 and Cys229. Cys250 (glycyl thioester intermediate) is an active-site residue. Residues Cys303 and Cys308 each contribute to the Zn(2+) site. The segment at 372 to 404 (APEKSSETSEETVSAATADETSLEDLMAQMKSM) is disordered. The segment covering 382-391 (ETVSAATADE) has biased composition (low complexity).

It belongs to the ubiquitin-activating E1 family. UBA5 subfamily. In terms of assembly, interacts (via C-terminus) with Ufc1. Interacts with Ufm1.

Its subcellular location is the cytoplasm. The protein localises to the nucleus. It localises to the golgi apparatus. Its function is as follows. E1-like enzyme which activates UFM1. In Drosophila melanogaster (Fruit fly), this protein is Ubiquitin-like modifier-activating enzyme 5.